An 884-amino-acid polypeptide reads, in one-letter code: MNIPTKFTTSKIRSDFLEFFKNKGHKIVPSAPLVPSNDPTLLFTNSGMVQFKDVFLGAEKRSEVRVADVQCCLRAGGKHNDLDSVGYTARHHTFFEMLGNWSFGDYFKKEAIMWAWELLTQVWELPPERLLVTVYHTDDESYALWRDMVGVPEDRIVRIGDNKGAPFASDNFWQMADTGPCGPCTEIFYDHGEHIPGGPPGSPGEDGDRFIEIWNLVFMQFDRQSDGTLVPLPTPCVDTGMGLERLAAILQHVHTNYEIDLFQTLILKAAELTAVADVQNKSLCVIADHSRACAFLIVDGVLPSNEGRGYVLRRIIRRALRHGWMLGVRQPFFNNMVPTLIAVMGDAYPKLQAAAESVMRTLLAEEERFAETLDVGMKIFNEVAAKVANGVIPGSDAFRLYDTYGFPVDLTADIARERGMRVDMAGFEAAMTQQRKTARAAGKFGRGVQLSAERAATLSPTVFLGYEQLQADDLRVVALLSDGGLTDSASVGDEVIVLTDRTPFYAESGGQVGDIGTLMASDGVRLEVTDTQKLMGQFHGHVARIVQGGVKVGDVLSGSVAVARRKMVALNHSATHLLHCALRSVFGTHVVQKGSLVAPDRLRFDFSHFEPISAAQMTLIERMVNDEVRANHLVMIEQMGMQAALDAGAMALFGEKYGEHVRVVTMGTSVELCGGTHITRTGDIGLFKIISECGVSSGVRRIEAVTGESALNHVLAEEHRLYEVAGLIGSNANNVVNHIRQLTDRQKTLERELEKLKGKLISGTITDLLSMAVNVADVKVVAARLDGLDGKALREALDRLKLQLSDAVIVLAGVTGGKVALVTAVNGPRAMGKVKADTLLSHVATQINGRGGGRVDFAQGGGEDGPSLRSALDGVATWVKQHLN.

4 residues coordinate Zn(2+): His-572, His-576, Cys-673, and His-677.

It belongs to the class-II aminoacyl-tRNA synthetase family. It depends on Zn(2+) as a cofactor.

The protein resides in the cytoplasm. It carries out the reaction tRNA(Ala) + L-alanine + ATP = L-alanyl-tRNA(Ala) + AMP + diphosphate. Functionally, catalyzes the attachment of alanine to tRNA(Ala) in a two-step reaction: alanine is first activated by ATP to form Ala-AMP and then transferred to the acceptor end of tRNA(Ala). Also edits incorrectly charged Ser-tRNA(Ala) and Gly-tRNA(Ala) via its editing domain. The polypeptide is Alanine--tRNA ligase (Xylella fastidiosa (strain M23)).